The following is a 244-amino-acid chain: ATP synthase subunit a, chloroplastic (244 aa).

The next 5 membrane-spanning stretches (helical) occupy residues 35–55, 92–112, 131–151, 196–216, and 217–237; these read QVLI…VIAV, VPFI…GALL, INTT…AGLS, LVVV…VMFL, and GLFT…AYIG.

It belongs to the ATPase A chain family. In terms of assembly, F-type ATPases have 2 components, CF(1) - the catalytic core - and CF(0) - the membrane proton channel. CF(1) has five subunits: alpha(3), beta(3), gamma(1), delta(1), epsilon(1). CF(0) has four main subunits: a, b, b' and c.

The protein localises to the plastid. Its subcellular location is the chloroplast thylakoid membrane. Its function is as follows. Key component of the proton channel; it plays a direct role in the translocation of protons across the membrane. The protein is ATP synthase subunit a, chloroplastic of Gossypium hirsutum (Upland cotton).